The following is a 444-amino-acid chain: Phosphoglucosamine mutase (444 aa).

The active-site Phosphoserine intermediate is Ser104. Residues Ser104, Asp243, Asp245, and Asp247 each contribute to the Mg(2+) site. At Ser104 the chain carries Phosphoserine.

It belongs to the phosphohexose mutase family. Mg(2+) serves as cofactor. In terms of processing, activated by phosphorylation.

It carries out the reaction alpha-D-glucosamine 1-phosphate = D-glucosamine 6-phosphate. Catalyzes the conversion of glucosamine-6-phosphate to glucosamine-1-phosphate. The protein is Phosphoglucosamine mutase of Neisseria meningitidis serogroup C (strain 053442).